We begin with the raw amino-acid sequence, 699 residues long: SHC SH2 domain-binding protein 1 homolog A (699 aa).

3 PbH1 repeats span residues 480–502, 503–524, and 532–554; these read SAEL…EIYP, GSKC…LIKD, and IPKI…VLVK. Residues 603-627 adopt a coiled-coil conformation; it reads AVEHTNNLEKDQGNLAIAKEEVECE.

The protein localises to the midbody. It localises to the cytoplasm. Its subcellular location is the cytoskeleton. It is found in the spindle. Functionally, may play a role in signaling pathways governing cellular proliferation. The polypeptide is SHC SH2 domain-binding protein 1 homolog A (shcbp1-a) (Xenopus laevis (African clawed frog)).